Reading from the N-terminus, the 204-residue chain is Peptide deformylase (204 aa).

Fe cation-binding residues include cysteine 131 and histidine 174. Glutamate 175 is a catalytic residue. A Fe cation-binding site is contributed by histidine 178.

This sequence belongs to the polypeptide deformylase family. Fe(2+) serves as cofactor.

The enzyme catalyses N-terminal N-formyl-L-methionyl-[peptide] + H2O = N-terminal L-methionyl-[peptide] + formate. In terms of biological role, removes the formyl group from the N-terminal Met of newly synthesized proteins. Requires at least a dipeptide for an efficient rate of reaction. N-terminal L-methionine is a prerequisite for activity but the enzyme has broad specificity at other positions. In Streptococcus equi subsp. zooepidemicus (strain MGCS10565), this protein is Peptide deformylase.